Here is a 249-residue protein sequence, read N- to C-terminus: Small ribosomal subunit protein uS3 (249 aa).

The KH type-2 domain occupies 39 to 107 (VRAMLKKRLY…EVHLNIVEIR (69 aa)). Residues 215-249 (LDKRLATESGPAGEGGGRERGDRPDRGDRGRRDRG) form a disordered region. The span at 230–249 (GGRERGDRPDRGDRGRRDRG) shows a compositional bias: basic and acidic residues.

The protein belongs to the universal ribosomal protein uS3 family. As to quaternary structure, part of the 30S ribosomal subunit. Forms a tight complex with proteins S10 and S14.

Its function is as follows. Binds the lower part of the 30S subunit head. Binds mRNA in the 70S ribosome, positioning it for translation. The protein is Small ribosomal subunit protein uS3 of Caulobacter sp. (strain K31).